Consider the following 1444-residue polypeptide: Chromatin-remodeling ATPase INO80 (1444 aa).

Disordered regions lie at residues 1–115, 215–238, 269–384, 432–454, and 524–551; these read MSFA…SPRK, QDEK…RLEM, RKIK…APLS, ASKQ…QARA, and AEGD…HAME. Polar residues predominate over residues 29 to 41; sequence APVTSTPREATQL. A compositionally biased stretch (basic and acidic residues) spans 55 to 85; that stretch reads KVKEQEQVLPRLEKKPSSEKRRRNAEQDNKA. The span at 101–110 shows a compositional bias: polar residues; the sequence is TKTTTQSWSF. The stretch at 207-283 forms a coiled coil; that stretch reads SEVQAKEIQD…TKRALEGVTA (77 aa). 3 stretches are compositionally biased toward basic and acidic residues: residues 329–340, 357–377, and 438–452; these read SKEQKQAEKDAA, PKED…RSKE, and KWQE…DTQA. A DBINO domain is found at 398–523; it reads IWRDIARKDI…SHFIGRKIKG (126 aa). Residues 440-511 are a coiled coil; that stretch reads QERTNKSMKD…KLNFLISQTE (72 aa). The region spanning 645 to 817 is the Helicase ATP-binding domain; it reads VNLYEQGING…WALLHFIMPT (173 aa). Position 658 to 665 (658 to 665) interacts with ATP; sequence DEMGLGKT. The short motif at 768-771 is the DEAQ box element; sequence DEAQ. In terms of domain architecture, Helicase C-terminal spans 1220 to 1380; the sequence is KLDELLRELK…GVDFNTRNRE (161 aa).

The protein belongs to the SNF2/RAD54 helicase family. Component of the INO80 chromatin-remodeling complex.

It is found in the nucleus. The catalysed reaction is ATP + H2O = ADP + phosphate + H(+). In terms of biological role, ATPase component of the INO80 complex which remodels chromatin by shifting nucleosomes and is involved in DNA repair. This is Chromatin-remodeling ATPase INO80 (ino80) from Aspergillus oryzae (strain ATCC 42149 / RIB 40) (Yellow koji mold).